We begin with the raw amino-acid sequence, 281 residues long: Pantothenate synthetase (281 aa).

30–37 (MGALHRGH) contributes to the ATP binding site. His37 serves as the catalytic Proton donor. Gln61 provides a ligand contact to (R)-pantoate. Residue Gln61 participates in beta-alanine binding. 147–150 (GEKD) contributes to the ATP binding site. Residue Gln153 coordinates (R)-pantoate. ATP is bound by residues Ile176 and 184–187 (LSSR).

Belongs to the pantothenate synthetase family. As to quaternary structure, homodimer.

The protein localises to the cytoplasm. The enzyme catalyses (R)-pantoate + beta-alanine + ATP = (R)-pantothenate + AMP + diphosphate + H(+). It participates in cofactor biosynthesis; (R)-pantothenate biosynthesis; (R)-pantothenate from (R)-pantoate and beta-alanine: step 1/1. Functionally, catalyzes the condensation of pantoate with beta-alanine in an ATP-dependent reaction via a pantoyl-adenylate intermediate. This Porphyromonas gingivalis (strain ATCC 33277 / DSM 20709 / CIP 103683 / JCM 12257 / NCTC 11834 / 2561) protein is Pantothenate synthetase.